We begin with the raw amino-acid sequence, 1428 residues long: DNA polymerase III PolC-type (1428 aa).

Residues 414–570 (FVVFDVETTG…YDAEATGYLL (157 aa)) form the Exonuclease domain.

It belongs to the DNA polymerase type-C family. PolC subfamily.

The protein localises to the cytoplasm. It catalyses the reaction DNA(n) + a 2'-deoxyribonucleoside 5'-triphosphate = DNA(n+1) + diphosphate. Required for replicative DNA synthesis. This DNA polymerase also exhibits 3' to 5' exonuclease activity. The sequence is that of DNA polymerase III PolC-type from Oceanobacillus iheyensis (strain DSM 14371 / CIP 107618 / JCM 11309 / KCTC 3954 / HTE831).